A 215-amino-acid chain; its full sequence is Small ribosomal subunit protein uS7 (215 aa).

Belongs to the universal ribosomal protein uS7 family. As to quaternary structure, part of the 30S ribosomal subunit.

Functionally, one of the primary rRNA binding proteins, it binds directly to 16S rRNA where it nucleates assembly of the head domain of the 30S subunit. Is located at the subunit interface close to the decoding center. This is Small ribosomal subunit protein uS7 from Thermococcus gammatolerans (strain DSM 15229 / JCM 11827 / EJ3).